The sequence spans 471 residues: Tetratricopeptide repeat protein 29 (471 aa).

7 TPR repeats span residues 92 to 131, 136 to 173, 182 to 215, 234 to 267, 274 to 307, 314 to 347, and 354 to 387; these read DKLR…EAAE, YEEV…AQLI, AEAE…TQGR, VRTY…AREG, GEAS…STSL, GRAY…ARNN, and IQAC…AMEV.

It localises to the cytoplasm. It is found in the cytoskeleton. The protein localises to the flagellum axoneme. In terms of biological role, axonemal protein which is implicated in axonemal and/or peri-axonemal structure assembly and regulates flagellum assembly and beating and therefore sperm motility. The polypeptide is Tetratricopeptide repeat protein 29 (Ttc29) (Rattus norvegicus (Rat)).